Reading from the N-terminus, the 567-residue chain is Urease subunit alpha (567 aa).

Residues Gly-129 to Phe-567 enclose the Urease domain. Ni(2+) contacts are provided by His-134, His-136, and Lys-217. Lys-217 carries the N6-carboxylysine modification. Position 219 (His-219) interacts with substrate. His-246 and His-272 together coordinate Ni(2+). Catalysis depends on His-320, which acts as the Proton donor. A Ni(2+)-binding site is contributed by Asp-360.

Belongs to the metallo-dependent hydrolases superfamily. Urease alpha subunit family. In terms of assembly, heterotrimer of UreA (gamma), UreB (beta) and UreC (alpha) subunits. Three heterotrimers associate to form the active enzyme. It depends on Ni cation as a cofactor. Post-translationally, carboxylation allows a single lysine to coordinate two nickel ions.

The protein localises to the cytoplasm. It carries out the reaction urea + 2 H2O + H(+) = hydrogencarbonate + 2 NH4(+). It participates in nitrogen metabolism; urea degradation; CO(2) and NH(3) from urea (urease route): step 1/1. In Tolumonas auensis (strain DSM 9187 / NBRC 110442 / TA 4), this protein is Urease subunit alpha.